We begin with the raw amino-acid sequence, 339 residues long: Senescence-specific cysteine protease SAG39 (339 aa).

The N-terminal stretch at 1–23 (MAMAKALLFAILGCLCLCSAVLA) is a signal peptide. Cystine bridges form between C144–C187, C178–C220, and C276–C328. C147 is a catalytic residue. Active-site residues include H282 and N303.

The protein belongs to the peptidase C1 family. In terms of tissue distribution, low expression in mature leaves.

The protein resides in the vacuole. In terms of biological role, cysteine protease that may have a developmental senescence specific cell death function during apoptosis, heavy metal detoxification, and hypersensitive response. The sequence is that of Senescence-specific cysteine protease SAG39 from Oryza sativa subsp. japonica (Rice).